Here is a 577-residue protein sequence, read N- to C-terminus: Glycine--tRNA ligase (577 aa).

R96 and E161 together coordinate substrate. Residues 193–195, 203–208, 319–320, and 434–437 contribute to the ATP site; these read RNE, IRLREF, EI, and GIDR. Residue 208–212 participates in substrate binding; it reads FSQAE. 430–434 is a binding site for substrate; it reads EPSFG.

This sequence belongs to the class-II aminoacyl-tRNA synthetase family.

The protein localises to the cytoplasm. The enzyme catalyses tRNA(Gly) + glycine + ATP = glycyl-tRNA(Gly) + AMP + diphosphate. Functionally, catalyzes the attachment of glycine to tRNA(Gly). The protein is Glycine--tRNA ligase of Methanothrix thermoacetophila (strain DSM 6194 / JCM 14653 / NBRC 101360 / PT) (Methanosaeta thermophila).